Reading from the N-terminus, the 237-residue chain is Proteasome subunit alpha (237 aa).

The protein belongs to the peptidase T1A family. In terms of assembly, the 20S proteasome core is composed of 14 alpha and 14 beta subunits that assemble into four stacked heptameric rings, resulting in a barrel-shaped structure. The two inner rings, each composed of seven catalytic beta subunits, are sandwiched by two outer rings, each composed of seven alpha subunits. The catalytic chamber with the active sites is on the inside of the barrel. Has a gated structure, the ends of the cylinder being occluded by the N-termini of the alpha-subunits. Is capped by the proteasome-associated ATPase, ARC.

The protein resides in the cytoplasm. It functions in the pathway protein degradation; proteasomal Pup-dependent pathway. Its activity is regulated as follows. The formation of the proteasomal ATPase ARC-20S proteasome complex, likely via the docking of the C-termini of ARC into the intersubunit pockets in the alpha-rings, may trigger opening of the gate for substrate entry. Interconversion between the open-gate and close-gate conformations leads to a dynamic regulation of the 20S proteasome proteolysis activity. Its function is as follows. Component of the proteasome core, a large protease complex with broad specificity involved in protein degradation. In Kineococcus radiotolerans (strain ATCC BAA-149 / DSM 14245 / SRS30216), this protein is Proteasome subunit alpha.